An 89-amino-acid chain; its full sequence is Small ribosomal subunit protein bS20 (89 aa).

A disordered region spans residues 1–28 (MANHYSALKRARQTETRTARNRANTSRM).

The protein belongs to the bacterial ribosomal protein bS20 family.

Binds directly to 16S ribosomal RNA. The protein is Small ribosomal subunit protein bS20 of Koribacter versatilis (strain Ellin345).